Here is a 318-residue protein sequence, read N- to C-terminus: NADH-ubiquinone oxidoreductase chain 1 (318 aa).

8 helical membrane passes run 2 to 22 (FTIN…FLTL), 70 to 90 (MFII…VPLP), 100 to 120 (LGVL…LWSG), 146 to 166 (LAII…STLI), 171 to 191 (HLWL…STLA), 222 to 242 (LFFM…TILF), 253 to 273 (ELYT…FLWI), and 294 to 314 (LPLT…MSSI).

This sequence belongs to the complex I subunit 1 family.

The protein localises to the mitochondrion inner membrane. It catalyses the reaction a ubiquinone + NADH + 5 H(+)(in) = a ubiquinol + NAD(+) + 4 H(+)(out). Functionally, core subunit of the mitochondrial membrane respiratory chain NADH dehydrogenase (Complex I) that is believed to belong to the minimal assembly required for catalysis. Complex I functions in the transfer of electrons from NADH to the respiratory chain. The immediate electron acceptor for the enzyme is believed to be ubiquinone. This is NADH-ubiquinone oxidoreductase chain 1 (MT-ND1) from Rhinoceros unicornis (Greater Indian rhinoceros).